The chain runs to 662 residues: MHLRGCACHLSLYCVYNDWENKIYRVPIFQCLFLEAETRSLKTFLIRGQSLDQESLNEIEVTRKETMLWDLQEQSNMMDKKIAAISNLIMNNGELVRTLSKFFVPLTVVLGDDGLEILEAYVCGEELMLPLDTVPVILRCIGDYAALDTKHLLSNECTQASKKIRFGYSVMDFHFSLTVSDVKICFSHTDTGEAVCEKMKQIFSFSVCAFGGEQVLLVTPKNAYALLFDDDLCLLLLQSVFAFLHEKIFGVYKQVLVQLCEYIGPDLWPFGNERSVSFIGYPNLWLLSVSDLERRVPDTTYICREILSFCGLAPILGPRGRHAVPVVRELSIEMPGSETSLQRFRFNSQYVSSESLCFQTGPEDTHLFFSDSDMYVVTLPDCLRLLLKSTVPKAFLPCFDENATEIDLLLKFMSRLQHRSYALFDAVIFMLDAFVSAFQRACTLMGMRWLLVRDLHMFYLTCDGKDTHVVMPLLQTAVENCWEKTTEIKQRPTFQCAEISRCGFIVYARFFLSSGLSQSKEAHWTVTASKYLSACIRTNKTGLCFASITVYFQDMMCVFIANRYNVSYWIEEFDPNDYCLEYHEGLLDCSRYTAVMSEDGQLVRQARGIALTDKINFSYYILVTLRVLRRWVESKFEDVEQTQFIRWENRMLCEHIHLLHLN.

Belongs to the herpesviridae HEPA family. As to quaternary structure, associates with the primase and the helicase to form the helicase-primase complex. Interacts with the origin-binding protein. Interacts with the polymerase catalytic subunit.

It localises to the host nucleus. Functionally, component of the helicase/primase complex. Unwinds the DNA at the replication forks and generates single-stranded DNA for both leading and lagging strand synthesis. The primase synthesizes short RNA primers on the lagging strand that the polymerase presumably elongates using dNTPs. The primase-associated factor has no known catalytic activity in the complex and may serve to facilitate the formation of the replisome by directly interacting with the origin-binding protein and the polymerase. This chain is DNA helicase/primase complex-associated protein (U74), found in Human herpesvirus 6A (strain Uganda-1102) (HHV-6 variant A).